Consider the following 1214-residue polypeptide: Zinc finger E-box-binding homeobox 2 (1214 aa).

The segment at 1–101 is disordered; it reads MKQPIMADGP…GVEHPWHNNE (101 aa). The segment covering 12-24 has biased composition (basic residues); the sequence is CKRRKQANPRRKN. The span at 57–74 shows a compositional bias: polar residues; it reads DQETSPASVPNHESSPHV. Residues 89-98 show a composition bias toward basic and acidic residues; that stretch reads REGGVEHPWH. The residue at position 142 (Ser142) is a Phosphoserine. 3 consecutive C2H2-type zinc fingers follow at residues 211-234, 241-263, and 282-304; these read LTCPYCDRGYKRLTSLKEHIKYRH, FSCPLCSYTFAYRTQLERHMVTH, and FKCTECGKAFKYKHHLKEHLRIH. The segment at 310–334 adopts a C2H2-type 4; atypical zinc-finger fold; it reads YECPNCKKRFSHSGSYSSHISSKKC. Ser356, Ser360, and Ser364 each carry phosphoserine. Residue Lys377 is modified to N6-acetyllysine. A Glycyl lysine isopeptide (Lys-Gly) (interchain with G-Cter in SUMO); alternate cross-link involves residue Lys391. Lys391 is covalently cross-linked (Glycyl lysine isopeptide (Lys-Gly) (interchain with G-Cter in SUMO2); alternate). Positions 437-487 are SMAD-MH2 binding domain; that stretch reads QHLGVGMEAPLLGFPTMNSNLSEVQKVLQIVDNTVSRQKMDCKAEEISKLK. Residues Lys479 and Lys555 each participate in a glycyl lysine isopeptide (Lys-Gly) (interchain with G-Cter in SUMO2) cross-link. The C2H2-type 5; atypical zinc-finger motif lies at 581-605; that stretch reads FSCQFCKESFPGPIPLHQHERYLCK. Glycyl lysine isopeptide (Lys-Gly) (interchain with G-Cter in SUMO2) cross-links involve residues Lys611 and Lys632. Positions 644-703 form a DNA-binding region, homeobox; atypical; it reads GMTSPINPYKDHMSVLKAYYAMNMEPNSDELLKISIAVGLPQEFVKEWFEQRKVYQYSNS. A Phosphoserine modification is found at Ser647. Residues 702-715 show a composition bias toward low complexity; it reads NSRSPSLERSSKPL. Disordered stretches follow at residues 702 to 740, 771 to 810, and 832 to 857; these read NSRSPSLERSSKPLAPNSNPPTKDSLLPRSPVKPMDSIT, PVEKLDHSRSNTPSPLNLSSTSSKNSHSSSYTPNSFSSEE, and ATKNKTKASSISLDHNSVSSSSENSD. Lys713 is covalently cross-linked (Glycyl lysine isopeptide (Lys-Gly) (interchain with G-Cter in SUMO2)). Phosphoserine occurs at positions 731 and 780. 2 stretches are compositionally biased toward low complexity: residues 780 to 808 and 840 to 854; these read SNTPSPLNLSSTSSKNSHSSSYTPNSFSS and SSISLDHNSVSSSSE. A Phosphothreonine modification is found at Thr782. Position 784 is a phosphoserine (Ser784). Residue Lys866 forms a Glycyl lysine isopeptide (Lys-Gly) (interchain with G-Cter in SUMO); alternate linkage. Lys866 is covalently cross-linked (Glycyl lysine isopeptide (Lys-Gly) (interchain with G-Cter in SUMO2); alternate). 2 C2H2-type zinc fingers span residues 999-1021 and 1027-1049; these read YACDLCDKTFQKSSSLLRHKYEH and HQCQICKKAFKHKHHLIEHSRLH. A C2H2-type 8; atypical zinc finger spans residues 1055-1076; the sequence is YQCDKCGKRFSHSGSYSQHMNH. The tract at residues 1117 to 1214 is disordered; that stretch reads TPQGYSDSEE…HEEDNMEDGM (98 aa). Phosphoserine occurs at positions 1122 and 1124. Positions 1127-1155 are enriched in basic and acidic residues; sequence RESMPRDGESEKEHEKEGEDGYGKLGRQD. Acidic residues predominate over residues 1156-1167; that stretch reads GDEEFEEEEEES. 2 stretches are compositionally biased toward basic and acidic residues: residues 1168–1179 and 1186–1205; these read ENKSMDTDPETI and GDHSMDDSSEDGKMETKSDH. Ser1203 is modified (phosphoserine).

It belongs to the delta-EF1/ZFH-1 C2H2-type zinc-finger family. Binds activated SMAD1, activated SMAD2 and activated SMAD3; binding with SMAD4 is not detected. Interacts with CBX4 and CTBP1. Post-translationally, sumoylation on Lys-391 and Lys-866 is promoted by the E3 SUMO-protein ligase CBX4, and impairs interaction with CTBP1 and transcription repression activity.

The protein localises to the nucleus. It is found in the chromosome. Functionally, transcriptional inhibitor that binds to DNA sequence 5'-CACCT-3' in different promoters. Represses transcription of E-cadherin. Represses expression of MEOX2. This Homo sapiens (Human) protein is Zinc finger E-box-binding homeobox 2.